Reading from the N-terminus, the 417-residue chain is UDP-N-acetylglucosamine 1-carboxyvinyltransferase (417 aa).

22-23 is a binding site for phosphoenolpyruvate; sequence KN. A UDP-N-acetyl-alpha-D-glucosamine-binding site is contributed by Arg91. The Proton donor role is filled by Cys115. Residue Cys115 is modified to 2-(S-cysteinyl)pyruvic acid O-phosphothioketal. UDP-N-acetyl-alpha-D-glucosamine is bound by residues 120-124, Asp304, and Ile326; that span reads RPVDL.

It belongs to the EPSP synthase family. MurA subfamily.

The protein resides in the cytoplasm. The enzyme catalyses phosphoenolpyruvate + UDP-N-acetyl-alpha-D-glucosamine = UDP-N-acetyl-3-O-(1-carboxyvinyl)-alpha-D-glucosamine + phosphate. Its pathway is cell wall biogenesis; peptidoglycan biosynthesis. Its function is as follows. Cell wall formation. Adds enolpyruvyl to UDP-N-acetylglucosamine. In Nitratidesulfovibrio vulgaris (strain ATCC 29579 / DSM 644 / CCUG 34227 / NCIMB 8303 / VKM B-1760 / Hildenborough) (Desulfovibrio vulgaris), this protein is UDP-N-acetylglucosamine 1-carboxyvinyltransferase.